Reading from the N-terminus, the 200-residue chain is NADH-quinone oxidoreductase subunit C (200 aa).

The protein belongs to the complex I 30 kDa subunit family. As to quaternary structure, NDH-1 is composed of 14 different subunits. Subunits NuoB, C, D, E, F, and G constitute the peripheral sector of the complex.

It localises to the cell inner membrane. It catalyses the reaction a quinone + NADH + 5 H(+)(in) = a quinol + NAD(+) + 4 H(+)(out). In terms of biological role, NDH-1 shuttles electrons from NADH, via FMN and iron-sulfur (Fe-S) centers, to quinones in the respiratory chain. The immediate electron acceptor for the enzyme in this species is believed to be ubiquinone. Couples the redox reaction to proton translocation (for every two electrons transferred, four hydrogen ions are translocated across the cytoplasmic membrane), and thus conserves the redox energy in a proton gradient. The chain is NADH-quinone oxidoreductase subunit C from Agrobacterium fabrum (strain C58 / ATCC 33970) (Agrobacterium tumefaciens (strain C58)).